Reading from the N-terminus, the 275-residue chain is tRNA-splicing endonuclease subunit SEN34 (275 aa).

Active-site residues include Tyr209, His217, and Lys250.

Belongs to the tRNA-intron endonuclease family. Heterotetramer composed of SEN2, SEN15, SEN34 and SEN54. Interacts directly with SEN15.

It localises to the nucleus. The protein resides in the endomembrane system. Its subcellular location is the mitochondrion outer membrane. It carries out the reaction pretRNA = a 3'-half-tRNA molecule with a 5'-OH end + a 5'-half-tRNA molecule with a 2',3'-cyclic phosphate end + an intron with a 2',3'-cyclic phosphate and a 5'-hydroxyl terminus.. Functionally, constitutes one of the two catalytic subunit of the tRNA-splicing endonuclease complex, a complex responsible for identification and cleavage of the splice sites in pre-tRNA. It cleaves pre-tRNA at the 5'- and 3'-splice sites to release the intron. The products are an intron and two tRNA half-molecules bearing 2',3'-cyclic phosphate and 5'-OH termini. There are no conserved sequences at the splice sites, but the intron is invariably located at the same site in the gene, placing the splice sites an invariant distance from the constant structural features of the tRNA body. It probably carries the active site for 3'-splice site cleavage. In Saccharomyces cerevisiae (strain ATCC 204508 / S288c) (Baker's yeast), this protein is tRNA-splicing endonuclease subunit SEN34 (SEN34).